Reading from the N-terminus, the 437-residue chain is ATP-dependent RNA helicase RhlB (437 aa).

The Q motif signature appears at 9-37; that stretch reads KKFADFPLHKEVQQALNEVGFEFCTPIQA. Residues 40–219 form the Helicase ATP-binding domain; the sequence is LPILLAKKDI…YDHMNEPEKV (180 aa). 53 to 60 contacts ATP; that stretch reads AQTGTGKT. The DEAD box motif lies at 165–168; the sequence is DEAD. The 148-residue stretch at 243-390 folds into the Helicase C-terminal domain; it reads KMPLLLSLLE…VTSYDSEALL (148 aa). The interval 394–437 is disordered; it reads PAPKRIHRKPSSHSRNSRDRSGSRPQGGHRGNAPRRHDKTRRHS. The span at 425 to 437 shows a compositional bias: basic residues; that stretch reads NAPRRHDKTRRHS.

This sequence belongs to the DEAD box helicase family. RhlB subfamily. Component of the RNA degradosome, which is a multiprotein complex involved in RNA processing and mRNA degradation.

The protein localises to the cytoplasm. The catalysed reaction is ATP + H2O = ADP + phosphate + H(+). Its function is as follows. DEAD-box RNA helicase involved in RNA degradation. Has RNA-dependent ATPase activity and unwinds double-stranded RNA. The protein is ATP-dependent RNA helicase RhlB of Shewanella piezotolerans (strain WP3 / JCM 13877).